Here is a 367-residue protein sequence, read N- to C-terminus: Phosphoribosylaminoimidazole-succinocarboxamide synthase (367 aa).

It belongs to the SAICAR synthetase family.

The enzyme catalyses 5-amino-1-(5-phospho-D-ribosyl)imidazole-4-carboxylate + L-aspartate + ATP = (2S)-2-[5-amino-1-(5-phospho-beta-D-ribosyl)imidazole-4-carboxamido]succinate + ADP + phosphate + 2 H(+). It functions in the pathway purine metabolism; IMP biosynthesis via de novo pathway; 5-amino-1-(5-phospho-D-ribosyl)imidazole-4-carboxamide from 5-amino-1-(5-phospho-D-ribosyl)imidazole-4-carboxylate: step 1/2. The polypeptide is Phosphoribosylaminoimidazole-succinocarboxamide synthase (Aliivibrio fischeri (strain MJ11) (Vibrio fischeri)).